Here is a 2091-residue protein sequence, read N- to C-terminus: Protein Ycf2 (2091 aa).

The interval 191–210 (DSSQLKGSSDQSRDPLDSIS) is disordered. 1432–1439 (GSIGTGRS) contributes to the ATP binding site.

This sequence belongs to the Ycf2 family.

The protein resides in the plastid. It localises to the chloroplast stroma. Its function is as follows. Probable ATPase of unknown function. Its presence in a non-photosynthetic plant (Epifagus virginiana) and experiments in tobacco indicate that it has an essential function which is probably not related to photosynthesis. This is Protein Ycf2 from Daucus carota (Wild carrot).